Here is a 1190-residue protein sequence, read N- to C-terminus: Ras-specific guanine nucleotide-releasing factor 2 (1190 aa).

A PH 1 domain is found at 22–133 (EGTKRGFLSK…WMEAIHQASY (112 aa)). Positions 155 to 193 (ETEKIAANQLRHQLEDQDTEIERLKSEIVALNKTKERMR) form a coiled coil. The region spanning 205–234 (DIKKIKKVQSFMRGWLCRRKWKTIVQDYIC) is the IQ domain. A DH domain is found at 243 to 429 (KRNQIVFTMV…EELSRVMHDE (187 aa)). One can recognise a PH 2 domain in the interval 470-588 (PSVERGKLSK…WMSDISQCVD (119 aa)). Residues 635–755 (KVPQIRYASV…LTSSLNSRIG (121 aa)) enclose the N-terminal Ras-GEF domain. Residues 713-744 (VDGKSPRLCRKFSSPPPLAVSRTSSPVRARKL) are disordered. Phosphoserine occurs at positions 725 and 726. The residue at position 736 (Ser-736) is a Phosphoserine; by CDK5. The interval 743-751 (KLSLTSSLN) is regulates proteasomal degradation. Ser-745 and Ser-749 each carry phosphoserine. The disordered stretch occupies residues 757–826 (LDLTTSSSSS…QPGGQVADST (70 aa)). The span at 760–776 (TTSSSSSSPTTTVHSPA) shows a compositional bias: low complexity. Residues 798-810 (TDMSPCRSPSTTP) show a composition bias toward polar residues. A phosphoserine mark is found at Ser-801, Ser-805, and Ser-925. The Ras-GEF domain occupies 955 to 1187 (SAMELAEQIT…YELSLKIEPR (233 aa)). The tract at residues 1052 to 1081 (ALNRSAIYRLKKTWTKVSKQTKALMDKLQK) is responsible of the affinity for farnesylated versus geranylgeranylated Ras.

Homooligomer and heterooligomer with RASGRF1. Interacts with Ras and RAC1. Interacts in a calcium-dependent manner with calmodulin. Interacts with CDK5R1 and probably EPB49. Interacts with the AMPA receptor through GRIA1. Interacts with microtubules. Phosphorylated by CDK5; down-regulates RASGRF2-mediated RAC1 activation. In terms of processing, ubiquitinated upon interaction with Ras. Ubiquitination leads to degradation through the 26S proteasome. As to expression, widely expressed. Detected in brain, lung, spleen, pancreas, kidney, liver, heart, mammary gland and skeletal muscle.

The protein resides in the cytoplasm. Its subcellular location is the cell membrane. It is found in the endoplasmic reticulum membrane. Functions as a calcium-regulated nucleotide exchange factor activating both Ras and RAC1 through the exchange of bound GDP for GTP. Preferentially activates HRAS in vivo compared to RRAS based on their different types of prenylation. Functions in synaptic plasticity by contributing to the induction of long term potentiation. The chain is Ras-specific guanine nucleotide-releasing factor 2 (Rasgrf2) from Rattus norvegicus (Rat).